A 483-amino-acid polypeptide reads, in one-letter code: MKTLNRRDFPGALWPERIIQFGEGNFLRAFIDWQVDLLNEHTDLNAGVVVVRPIASDFPPSLSTQDGLYTTIIRGLNEKGEAVSESRLIRSVNREISVYAQYDEFLKLAHNPDIRFVFSNTTEAGISYHAGDQFDDAPAVSYPAKLTRLLFERFSHFDGAQDKGWVIIPCELIDYNGEALRELVLRYAHEWALPAAFTTWLESANSFCSTLVDRIVTGYPRDEVAQLEESLGYHDAFLDTAEHFYLFVIQGPQWLARELRLDKLPLNVLIVDDIKPYKARKVAILNGAHTALVPVAFLAGLNTVGEAMNDAQICAFVERAIHDEIIPVLDLPRNELESFADAVVSRFRNPYIKHQLLSIALNGMTKFRTRILPQLLAGQAQMGTLPPRLTFALAALIAFYRGERNGEGYPLQDDAHWLARFEQLWTQRGDNTITLRELVDAVLSDCEHWEQDLTAVPGLAAQVTRDLDAILNQGMRHAVAPLC.

Position 18–29 (18–29 (IIQFGEGNFLRA)) interacts with NAD(+).

The protein belongs to the mannitol dehydrogenase family. UxaB subfamily.

The enzyme catalyses D-altronate + NAD(+) = keto-D-tagaturonate + NADH + H(+). The protein operates within carbohydrate metabolism; pentose and glucuronate interconversion. The chain is Altronate oxidoreductase from Cronobacter sakazakii (strain ATCC BAA-894) (Enterobacter sakazakii).